The following is a 565-amino-acid chain: Proline--tRNA ligase (565 aa).

The protein belongs to the class-II aminoacyl-tRNA synthetase family. ProS type 1 subfamily. As to quaternary structure, homodimer.

It is found in the cytoplasm. The enzyme catalyses tRNA(Pro) + L-proline + ATP = L-prolyl-tRNA(Pro) + AMP + diphosphate. Functionally, catalyzes the attachment of proline to tRNA(Pro) in a two-step reaction: proline is first activated by ATP to form Pro-AMP and then transferred to the acceptor end of tRNA(Pro). As ProRS can inadvertently accommodate and process non-cognate amino acids such as alanine and cysteine, to avoid such errors it has two additional distinct editing activities against alanine. One activity is designated as 'pretransfer' editing and involves the tRNA(Pro)-independent hydrolysis of activated Ala-AMP. The other activity is designated 'posttransfer' editing and involves deacylation of mischarged Ala-tRNA(Pro). The misacylated Cys-tRNA(Pro) is not edited by ProRS. The polypeptide is Proline--tRNA ligase (Lactobacillus delbrueckii subsp. bulgaricus (strain ATCC BAA-365 / Lb-18)).